The following is a 592-amino-acid chain: Inactive heparanase-2 (592 aa).

Positions 1–38 (MRVLCAFPEAMASSSSRPPSCLALVALFLALLLHLSLS) are cleaved as a signal peptide. Asn-254 and Asn-392 each carry an N-linked (GlcNAc...) asparagine glycan.

It belongs to the glycosyl hydrolase 79 family. As to quaternary structure, interacts with HPSE. Interacts with SDC1 (via glycan chains).

Its subcellular location is the secreted. It is found in the extracellular space. The protein resides in the extracellular matrix. Functionally, binds heparin and heparan sulfate with high affinity, but lacks heparanase activity. Inhibits HPSE, possibly by competing for its substrates (in vitro). In Mus musculus (Mouse), this protein is Inactive heparanase-2 (Hpse2).